A 236-amino-acid polypeptide reads, in one-letter code: Small ribosomal subunit protein uS5 (236 aa).

Residues 61–124 form the S5 DRBM domain; the sequence is ENQEVLDIAL…NYAKLNIIEI (64 aa).

It belongs to the universal ribosomal protein uS5 family. Part of the 30S ribosomal subunit. Contacts protein S4.

Functionally, with S4 and S12 plays an important role in translational accuracy. The chain is Small ribosomal subunit protein uS5 from Pyrococcus furiosus (strain ATCC 43587 / DSM 3638 / JCM 8422 / Vc1).